The following is a 161-amino-acid chain: ATP synthase subunit b 1 (161 aa).

Residues 1-21 (MFATAEFWILACLVAFFAILG) traverse the membrane as a helical segment.

It belongs to the ATPase B chain family. F-type ATPases have 2 components, F(1) - the catalytic core - and F(0) - the membrane proton channel. F(1) has five subunits: alpha(3), beta(3), gamma(1), delta(1), epsilon(1). F(0) has three main subunits: a(1), b(2) and c(10-14). The alpha and beta chains form an alternating ring which encloses part of the gamma chain. F(1) is attached to F(0) by a central stalk formed by the gamma and epsilon chains, while a peripheral stalk is formed by the delta and b chains.

The protein localises to the cell inner membrane. F(1)F(0) ATP synthase produces ATP from ADP in the presence of a proton or sodium gradient. F-type ATPases consist of two structural domains, F(1) containing the extramembraneous catalytic core and F(0) containing the membrane proton channel, linked together by a central stalk and a peripheral stalk. During catalysis, ATP synthesis in the catalytic domain of F(1) is coupled via a rotary mechanism of the central stalk subunits to proton translocation. Functionally, component of the F(0) channel, it forms part of the peripheral stalk, linking F(1) to F(0). The sequence is that of ATP synthase subunit b 1 from Parvibaculum lavamentivorans (strain DS-1 / DSM 13023 / NCIMB 13966).